Here is a 237-residue protein sequence, read N- to C-terminus: MRFDVITLFPEMFSALTESGVSRRAYQDQLYQFKTWNPRTYTTDRHKTVDDRPYGGGPGMLMMYPPLKKTVDAITDEVGEKPYVVYLSPQGRPLTQQKLSELQSHSNVTLVCGRYEGIDERFIETVVDEEICVGDFIVSGGELPAMMLMDGMIRLIPGALGHNQSAEQDSFSDGLLDCPHYTRPVEVDGMGVPEVLQEGHHAKIEQWRHEQKLLRTKQKRPDLYTAYLAKHTETQDK.

S-adenosyl-L-methionine contacts are provided by residues Gly113 and 133–138; that span reads VGDFIV.

This sequence belongs to the RNA methyltransferase TrmD family. As to quaternary structure, homodimer.

The protein localises to the cytoplasm. It catalyses the reaction guanosine(37) in tRNA + S-adenosyl-L-methionine = N(1)-methylguanosine(37) in tRNA + S-adenosyl-L-homocysteine + H(+). Functionally, specifically methylates guanosine-37 in various tRNAs. In Hydrogenovibrio crunogenus (strain DSM 25203 / XCL-2) (Thiomicrospira crunogena), this protein is tRNA (guanine-N(1)-)-methyltransferase.